A 75-amino-acid polypeptide reads, in one-letter code: DNA-directed RNA polymerase subunit omega (75 aa).

The protein belongs to the RNA polymerase subunit omega family. In cyanobacteria the RNAP catalytic core is composed of 2 alpha, 1 beta, 1 beta', 1 gamma and 1 omega subunit. When a sigma factor is associated with the core the holoenzyme is formed, which can initiate transcription.

It catalyses the reaction RNA(n) + a ribonucleoside 5'-triphosphate = RNA(n+1) + diphosphate. Its function is as follows. Promotes RNA polymerase assembly. Latches the N- and C-terminal regions of the beta' subunit thereby facilitating its interaction with the beta and alpha subunits. This is DNA-directed RNA polymerase subunit omega from Gloeothece citriformis (strain PCC 7424) (Cyanothece sp. (strain PCC 7424)).